We begin with the raw amino-acid sequence, 45 residues long: Large ribosomal subunit protein bL34 (45 aa).

This sequence belongs to the bacterial ribosomal protein bL34 family.

In Prochlorococcus marinus (strain MIT 9313), this protein is Large ribosomal subunit protein bL34.